Consider the following 162-residue polypeptide: Protein-export protein SecB (162 aa).

The protein belongs to the SecB family. In terms of assembly, homotetramer, a dimer of dimers. One homotetramer interacts with 1 SecA dimer.

It localises to the cytoplasm. Its function is as follows. One of the proteins required for the normal export of preproteins out of the cell cytoplasm. It is a molecular chaperone that binds to a subset of precursor proteins, maintaining them in a translocation-competent state. It also specifically binds to its receptor SecA. This is Protein-export protein SecB from Bradyrhizobium sp. (strain BTAi1 / ATCC BAA-1182).